The primary structure comprises 289 residues: F-box protein PP2-B15 (289 aa).

The region spanning 1–43 (MMLPEACVATILSFTTPADTISSAAVSSVFRVAGDSDFVWEKF) is the F-box domain.

The chain is F-box protein PP2-B15 (PP2B15) from Arabidopsis thaliana (Mouse-ear cress).